A 78-amino-acid chain; its full sequence is Large ribosomal subunit protein bL28 (78 aa).

Belongs to the bacterial ribosomal protein bL28 family.

In Methylococcus capsulatus (strain ATCC 33009 / NCIMB 11132 / Bath), this protein is Large ribosomal subunit protein bL28.